Reading from the N-terminus, the 225-residue chain is Large ribosomal subunit protein uL1 (225 aa).

This sequence belongs to the universal ribosomal protein uL1 family. In terms of assembly, part of the 50S ribosomal subunit.

Functionally, binds directly to 23S rRNA. The L1 stalk is quite mobile in the ribosome, and is involved in E site tRNA release. In terms of biological role, protein L1 is also a translational repressor protein, it controls the translation of the L11 operon by binding to its mRNA. This is Large ribosomal subunit protein uL1 from Rhodopirellula baltica (strain DSM 10527 / NCIMB 13988 / SH1).